Consider the following 129-residue polypeptide: Holo-[acyl-carrier-protein] synthase (129 aa).

D8 and E58 together coordinate Mg(2+).

Belongs to the P-Pant transferase superfamily. AcpS family. Requires Mg(2+) as cofactor.

It is found in the cytoplasm. It catalyses the reaction apo-[ACP] + CoA = holo-[ACP] + adenosine 3',5'-bisphosphate + H(+). In terms of biological role, transfers the 4'-phosphopantetheine moiety from coenzyme A to a Ser of acyl-carrier-protein. In Acidithiobacillus ferrooxidans (strain ATCC 53993 / BNL-5-31) (Leptospirillum ferrooxidans (ATCC 53993)), this protein is Holo-[acyl-carrier-protein] synthase.